The chain runs to 389 residues: MAQQMSPGQHGSECIHDNAQSHLPPYVDCDSAGFRNNRSNLTLKFSSDFEKAQKAMEFCSDVCAVYFPADLDVVFNSEIENELAVDICEWRFFPCFSESLKRLAISMSRLSSLQIDLSYERRTLLHHHLVWIFLMDEVCERLPLLGLHDTMERKYLENLKNITMDLPIEDLNQYKGICPDDLLQVALDVQRILAEDLMPLKRALLEESHVQKCSETLCLFFDNQYEEGKIFFKRPTTHQIMSTRGYTIGTNMVFLLFLQTPMVDLYNADDPGLVQLSILVALFHDFIGLQKDLDSLKQDCDGSVGLNLVRVSMQESGHDEKEALQTVVRRLNSYCHGLEFFMSAYTPLCKQLYQEILKFVFALYDYHLLGATESSNSRYGWHRVSDYKA.

The Mg(2+) site is built by aspartate 136, glutamate 140, histidine 284, glycine 288, and aspartate 292. The DDxx(x)D/E motif signature appears at 136–140 (DEVCE). The short motif at 284–292 (HDFIGLQKD) is the NDxxSxxxD/E motif element.

The protein belongs to the terpene synthase family.

The enzyme catalyses (2E,6E)-farnesyl diphosphate = bicyclogermacrene + diphosphate. Functionally, catalyzes the cyclization of trans,trans-farnesyl diphosphate (FPP) to the bicyclic sesquiterpene bicyclogermacrene. The chain is (+)-bicyclogermacrene synthase TS4 from Penicillium expansum (Blue mold rot fungus).